We begin with the raw amino-acid sequence, 280 residues long: Undecaprenyl-diphosphatase (280 aa).

The next 8 membrane-spanning stretches (helical) occupy residues 1–21 (MTIL…FLPV), 41–61 (FVRA…LVLY), 87–107 (FDLY…GFLF), 115–135 (LGSV…MLFV), 147–167 (ITYP…FLPG), 186–206 (KAAA…ATLL), 225–245 (IVLL…IKFF), and 260–280 (YRIL…SLAV).

The protein belongs to the UppP family.

It is found in the cell inner membrane. The catalysed reaction is di-trans,octa-cis-undecaprenyl diphosphate + H2O = di-trans,octa-cis-undecaprenyl phosphate + phosphate + H(+). Functionally, catalyzes the dephosphorylation of undecaprenyl diphosphate (UPP). Confers resistance to bacitracin. This is Undecaprenyl-diphosphatase from Porphyromonas gingivalis (strain ATCC 33277 / DSM 20709 / CIP 103683 / JCM 12257 / NCTC 11834 / 2561).